Here is a 240-residue protein sequence, read N- to C-terminus: Octanoyltransferase (240 aa).

The BPL/LPL catalytic domain occupies 49–233; the sequence is HQAEELVWLL…AFESVFGATR (185 aa). Substrate contacts are provided by residues 87–94, 162–164, and 175–177; these read RGGQVTYH, AIG, and GIA. C193 (acyl-thioester intermediate) is an active-site residue.

The protein belongs to the LipB family.

The protein resides in the cytoplasm. The enzyme catalyses octanoyl-[ACP] + L-lysyl-[protein] = N(6)-octanoyl-L-lysyl-[protein] + holo-[ACP] + H(+). It participates in protein modification; protein lipoylation via endogenous pathway; protein N(6)-(lipoyl)lysine from octanoyl-[acyl-carrier-protein]: step 1/2. Its function is as follows. Catalyzes the transfer of endogenously produced octanoic acid from octanoyl-acyl-carrier-protein onto the lipoyl domains of lipoate-dependent enzymes. Lipoyl-ACP can also act as a substrate although octanoyl-ACP is likely to be the physiological substrate. The protein is Octanoyltransferase of Bradyrhizobium sp. (strain ORS 278).